We begin with the raw amino-acid sequence, 206 residues long: Glycerol-3-phosphate acyltransferase (206 aa).

The next 5 helical transmembrane spans lie at 3 to 23, 47 to 67, 79 to 99, 119 to 139, and 152 to 172; these read LSLI…VIIG, VLGP…GTLA, HSLV…SIFL, PLFF…TSMV, and ILSF…VLIF.

It belongs to the PlsY family. In terms of assembly, probably interacts with PlsX.

Its subcellular location is the cell membrane. The catalysed reaction is an acyl phosphate + sn-glycerol 3-phosphate = a 1-acyl-sn-glycero-3-phosphate + phosphate. It participates in lipid metabolism; phospholipid metabolism. Its function is as follows. Catalyzes the transfer of an acyl group from acyl-phosphate (acyl-PO(4)) to glycerol-3-phosphate (G3P) to form lysophosphatidic acid (LPA). This enzyme utilizes acyl-phosphate as fatty acyl donor, but not acyl-CoA or acyl-ACP. In Latilactobacillus sakei subsp. sakei (strain 23K) (Lactobacillus sakei subsp. sakei), this protein is Glycerol-3-phosphate acyltransferase.